The sequence spans 398 residues: DNA polymerase IV (398 aa).

In terms of domain architecture, UmuC spans 5-187 (IFLVDMNAFF…LSIKSMHGVG (183 aa)). Positions 9 and 105 each coordinate Mg(2+). Residue Glu106 is part of the active site.

Belongs to the DNA polymerase type-Y family. In terms of assembly, monomer. It depends on Mg(2+) as a cofactor.

The protein resides in the cytoplasm. It carries out the reaction DNA(n) + a 2'-deoxyribonucleoside 5'-triphosphate = DNA(n+1) + diphosphate. Functionally, poorly processive, error-prone DNA polymerase involved in untargeted mutagenesis. Copies undamaged DNA at stalled replication forks, which arise in vivo from mismatched or misaligned primer ends. These misaligned primers can be extended by PolIV. Exhibits no 3'-5' exonuclease (proofreading) activity. May be involved in translesional synthesis, in conjunction with the beta clamp from PolIII. The polypeptide is DNA polymerase IV (Alkaliphilus oremlandii (strain OhILAs) (Clostridium oremlandii (strain OhILAs))).